A 516-amino-acid polypeptide reads, in one-letter code: Lysine--tRNA ligase (516 aa).

Residues 1–23 are disordered; sequence MTEPNRAQAAPASPTAELPAADE. Glu-426 and Glu-433 together coordinate Mg(2+).

Belongs to the class-II aminoacyl-tRNA synthetase family. Homodimer. Mg(2+) serves as cofactor.

The protein resides in the cytoplasm. The catalysed reaction is tRNA(Lys) + L-lysine + ATP = L-lysyl-tRNA(Lys) + AMP + diphosphate. The polypeptide is Lysine--tRNA ligase (Cupriavidus pinatubonensis (strain JMP 134 / LMG 1197) (Cupriavidus necator (strain JMP 134))).